Consider the following 285-residue polypeptide: Bifunctional protein FolD (285 aa).

Residues 165 to 167 (GRS) and Ser190 contribute to the NADP(+) site.

This sequence belongs to the tetrahydrofolate dehydrogenase/cyclohydrolase family. Homodimer.

It carries out the reaction (6R)-5,10-methylene-5,6,7,8-tetrahydrofolate + NADP(+) = (6R)-5,10-methenyltetrahydrofolate + NADPH. It catalyses the reaction (6R)-5,10-methenyltetrahydrofolate + H2O = (6R)-10-formyltetrahydrofolate + H(+). It functions in the pathway one-carbon metabolism; tetrahydrofolate interconversion. In terms of biological role, catalyzes the oxidation of 5,10-methylenetetrahydrofolate to 5,10-methenyltetrahydrofolate and then the hydrolysis of 5,10-methenyltetrahydrofolate to 10-formyltetrahydrofolate. This is Bifunctional protein FolD from Staphylococcus haemolyticus (strain JCSC1435).